Consider the following 486-residue polypeptide: Cardiolipin synthase A (486 aa).

A run of 2 helical transmembrane segments spans residues 3–23 (TFYTVISWLSVFGYWLLIAGV) and 38–58 (MAWLLIIYILPLVGIIAYLSF). 2 PLD phosphodiesterase domains span residues 219 to 246 (MDLRQHRKIVLIDNYVAYTGSMNMVDPR) and 399 to 426 (EGGLLHSKSVLVDGQLSLVGTVNLDMRS). Residues His224, Lys226, Asp231, His404, Lys406, and Asp411 contribute to the active site.

This sequence belongs to the phospholipase D family. Cardiolipin synthase subfamily. ClsA sub-subfamily.

It is found in the cell inner membrane. It carries out the reaction 2 a 1,2-diacyl-sn-glycero-3-phospho-(1'-sn-glycerol) = a cardiolipin + glycerol. Its function is as follows. Catalyzes the reversible phosphatidyl group transfer from one phosphatidylglycerol molecule to another to form cardiolipin (CL) (diphosphatidylglycerol) and glycerol. This is Cardiolipin synthase A from Yersinia pseudotuberculosis serotype IB (strain PB1/+).